The chain runs to 459 residues: Phosphoglucosamine mutase (459 aa).

Ser102 serves as the catalytic Phosphoserine intermediate. Ser102, Asp243, Asp245, and Asp247 together coordinate Mg(2+). The residue at position 102 (Ser102) is a Phosphoserine.

It belongs to the phosphohexose mutase family. Mg(2+) serves as cofactor. Post-translationally, activated by phosphorylation.

It catalyses the reaction alpha-D-glucosamine 1-phosphate = D-glucosamine 6-phosphate. In terms of biological role, catalyzes the conversion of glucosamine-6-phosphate to glucosamine-1-phosphate. The protein is Phosphoglucosamine mutase of Bartonella quintana (strain Toulouse) (Rochalimaea quintana).